A 461-amino-acid polypeptide reads, in one-letter code: ATP synthase subunit beta (461 aa).

151–158 (GGAGVGKT) serves as a coordination point for ATP.

The protein belongs to the ATPase alpha/beta chains family. As to quaternary structure, F-type ATPases have 2 components, CF(1) - the catalytic core - and CF(0) - the membrane proton channel. CF(1) has five subunits: alpha(3), beta(3), gamma(1), delta(1), epsilon(1). CF(0) has three main subunits: a(1), b(2) and c(9-12). The alpha and beta chains form an alternating ring which encloses part of the gamma chain. CF(1) is attached to CF(0) by a central stalk formed by the gamma and epsilon chains, while a peripheral stalk is formed by the delta and b chains.

The protein resides in the cell inner membrane. It catalyses the reaction ATP + H2O + 4 H(+)(in) = ADP + phosphate + 5 H(+)(out). Produces ATP from ADP in the presence of a proton gradient across the membrane. The catalytic sites are hosted primarily by the beta subunits. This chain is ATP synthase subunit beta, found in Pseudoalteromonas translucida (strain TAC 125).